The following is a 273-amino-acid chain: 3-((Z)-2-isocyanoethenyl)-1H-indole synthase (273 aa).

Fe cation is bound by residues His-105, Asp-107, and His-254.

The protein belongs to the TfdA dioxygenase family. Fe(2+) is required as a cofactor.

The enzyme catalyses (2S)-3-(1H-indol-3-yl)-2-isocyanopropanoate + 2-oxoglutarate + O2 + H(+) = 3-[(Z)-2-isocyanoethenyl]-1H-indole + succinate + 2 CO2 + H2O. Involved in the biosynthesis of ambiguines, a family of hapalindole-type alkaloids. Responsible for the synthesis of Z-3-(2-isocyanoethen)-indole, a biosynthetic precursor to all ambiguines. The polypeptide is 3-((Z)-2-isocyanoethenyl)-1H-indole synthase (Fischerella ambigua (strain UTEX 1903)).